The primary structure comprises 30 residues: Sperm protamine P5 (30 aa).

The disordered stretch occupies residues 1–30; it reads YRRRRRRGRRGRRRRGRRRRSRGRRRAHGG.

Testis.

The protein resides in the nucleus. It localises to the chromosome. Its function is as follows. Protamines substitute for histones in the chromatin of sperm during the haploid phase of spermatogenesis. They compact sperm DNA into a highly condensed, stable and inactive complex. The sequence is that of Sperm protamine P5 from Octopus vulgaris (Common octopus).